The chain runs to 212 residues: Ropporin-1 (212 aa).

Residues 12 to 43 (PELPELLKQFTKAAIRTQPPDLIQWAAEYFGA) enclose the RIIa domain. Position 56 is a phosphoserine (Ser56). Residues 209–212 (VRLE) are interaction with RHPN1.

It belongs to the ropporin family. Homodimer. Interacts with AKAP3. May interact with SPA17. Interacts with RHPN1. Interacts with FSCB; the interaction increases upon spermatozoa capacitation conditions. Interacts with CFAP61. Post-translationally, sumoylated, sumoylation decreases upon spermatozoa capacitation conditions.

The protein localises to the cell projection. The protein resides in the cilium. It is found in the flagellum. Its function is as follows. Important for male fertility. With ROPN1L, involved in fibrous sheath integrity and sperm motility, plays a role in PKA-dependent signaling processes required for spermatozoa capacitation. The sequence is that of Ropporin-1 (Ropn1) from Rattus norvegicus (Rat).